Here is a 379-residue protein sequence, read N- to C-terminus: Succinyl-diaminopimelate desuccinylase (379 aa).

His-70 contacts Zn(2+). Residue Asp-72 is part of the active site. Asp-103 lines the Zn(2+) pocket. Glu-137 (proton acceptor) is an active-site residue. The Zn(2+) site is built by Glu-138, Glu-166, and His-352.

It belongs to the peptidase M20A family. DapE subfamily. As to quaternary structure, homodimer. The cofactor is Zn(2+). Co(2+) serves as cofactor.

It catalyses the reaction N-succinyl-(2S,6S)-2,6-diaminopimelate + H2O = (2S,6S)-2,6-diaminopimelate + succinate. It functions in the pathway amino-acid biosynthesis; L-lysine biosynthesis via DAP pathway; LL-2,6-diaminopimelate from (S)-tetrahydrodipicolinate (succinylase route): step 3/3. Its function is as follows. Catalyzes the hydrolysis of N-succinyl-L,L-diaminopimelic acid (SDAP), forming succinate and LL-2,6-diaminopimelate (DAP), an intermediate involved in the bacterial biosynthesis of lysine and meso-diaminopimelic acid, an essential component of bacterial cell walls. This chain is Succinyl-diaminopimelate desuccinylase, found in Paraburkholderia xenovorans (strain LB400).